Reading from the N-terminus, the 246-residue chain is Probable transcriptional regulatory protein YebC (246 aa).

Residues 1–20 (MAGHSKWANTRHRKAAQDAK) form a disordered region.

Belongs to the TACO1 family.

The protein resides in the cytoplasm. The protein is Probable transcriptional regulatory protein YebC of Shigella dysenteriae serotype 1 (strain Sd197).